A 188-amino-acid chain; its full sequence is Epididymal-specific lipocalin-5 (188 aa).

Residues 1–19 form the signal peptide; it reads MENIMPFALLGLCVGLAAG. Cysteine 82 and cysteine 176 are disulfide-bonded.

It belongs to the calycin superfamily. Lipocalin family. There are two similar, immunologically cross-reacting forms of this protein, designated B and C, which probably result from different processing of the amino end. In terms of processing, the N-terminus of form C is probably blocked. In terms of tissue distribution, synthesized exclusively in the proximal part (caput epididymidis) of the epididymis. It makes up a substantial part of the total protein in the epididymal luminal fluid and binds to the sperm membrane.

It localises to the secreted. Associates with spermatozoa in the epididymal fluid but does not bind tightly to them. Binds both all-trans and 9-cis retinoic acid. May act as a retinoid carrier protein which is required for epididymal function and/or sperm maturation. The chain is Epididymal-specific lipocalin-5 (Lcn5) from Rattus norvegicus (Rat).